The primary structure comprises 370 residues: Isopentenyl-diphosphate delta-isomerase (370 aa).

Residue 8–9 (RK) participates in substrate binding. Residues threonine 65, 66–68 (GMT), serine 99, and asparagine 127 each bind FMN. 99–101 (SQR) contacts substrate. Glutamine 166 provides a ligand contact to substrate. Glutamate 167 contributes to the Mg(2+) binding site. Residues lysine 198, serine 223, threonine 228, 277-279 (GMR), and 298-299 (AL) each bind FMN.

This sequence belongs to the IPP isomerase type 2 family. In terms of assembly, homooctamer. Dimer of tetramers. Requires FMN as cofactor. The cofactor is NADPH. Mg(2+) is required as a cofactor.

It localises to the cytoplasm. The enzyme catalyses isopentenyl diphosphate = dimethylallyl diphosphate. Its function is as follows. Involved in the biosynthesis of isoprenoids. Catalyzes the 1,3-allylic rearrangement of the homoallylic substrate isopentenyl (IPP) to its allylic isomer, dimethylallyl diphosphate (DMAPP). This chain is Isopentenyl-diphosphate delta-isomerase, found in Pyrococcus abyssi (strain GE5 / Orsay).